Reading from the N-terminus, the 541-residue chain is MESQRNILLIGLLFVSFLLWQQWQADKAPKPVATESSLVANAANSHSADVPEADTGVPAAVTATSKLITVKTDQLDVQINPIGGDIVFAALVSHKMEQDKDQPFVLLEQTKDFTYIAQSGLIGRDGIDSSAKGRAAFSTAATEYTLAEGQDTLEVPLTYVADNGVTYTKVFVFHRGKFNVDVDYKINNTSAAPLQVQMYGQIKQTIKPSESSMVMPTYRGGAFSTQDVRYEKYKFDDMAKSNLNQATLGGWAAMLQHYFVSAWIPPATDSNTIFSSVSAGGLANIGFRGAVYDIAPGATQEISSQFYVGPKDQKALSAISDTLNLVVDYGFLWWLAVPIHWLLMFYQSFVGNWGMAIILITLTVRGLLFPLTKAQYTSMAKMRNLQPKLTDLKERFGDDRQKMGQAMMELYKKEKVNPMGGCLPIILQMPIFIALYWVLLESFELRHAPFMLWIHDLSVQDPYYILPLLMGVSMFVMQKMQPIAPTMDPMQVKMMQWMPVIFTVFFLWFPAGLVLYWLVGNIVAITQQKIIYAGLAKKGLK.

Transmembrane regions (helical) follow at residues 6–26, 325–345, 349–369, 420–440, 457–477, and 500–520; these read NILLIGLLFVSFLLWQQWQAD, LVVDYGFLWWLAVPIHWLLMF, FVGNWGMAIILITLTVRGLLF, GGCLPIILQMPIFIALYWVLL, LSVQDPYYILPLLMGVSMFVM, and VIFTVFFLWFPAGLVLYWLVG.

This sequence belongs to the OXA1/ALB3/YidC family. Type 1 subfamily. Interacts with the Sec translocase complex via SecD. Specifically interacts with transmembrane segments of nascent integral membrane proteins during membrane integration.

Its subcellular location is the cell inner membrane. In terms of biological role, required for the insertion and/or proper folding and/or complex formation of integral membrane proteins into the membrane. Involved in integration of membrane proteins that insert both dependently and independently of the Sec translocase complex, as well as at least some lipoproteins. Aids folding of multispanning membrane proteins. The sequence is that of Membrane protein insertase YidC from Shewanella baltica (strain OS223).